Reading from the N-terminus, the 163-residue chain is Transcription antitermination protein NusB (163 aa).

The interval 1 to 21 is disordered; that stretch reads MTTFLSDSEHPQDVKAPPKSA.

This sequence belongs to the NusB family.

Involved in transcription antitermination. Required for transcription of ribosomal RNA (rRNA) genes. Binds specifically to the boxA antiterminator sequence of the ribosomal RNA (rrn) operons. The protein is Transcription antitermination protein NusB of Dechloromonas aromatica (strain RCB).